Consider the following 363-residue polypeptide: MAQSSLRLVENPTMDKDKSKAIDAALAQIERAFGKGSIMRLGKGDKVQEVETISTGSLGLDVALGVGGLPRGRVIEIYGPESSGKTTLALHTIAEAQKKGGVCAFVDAEHALDPVYARKLGVNLDDLLISQPDTGEQALEITDTLVRSGAIDVLVVDSVAALTPRAEIEGEMGDQQPGLQARLMSQALRKLTGSISRSNCMVIFINQIRMKIGVMYGSPETTTGGNALKFYASVRLDIRRVSTLKDRDEPIGNSVRVKVVKNKVAPPFKQVEFDIMFGEGVSKVGELIDLGVKAGIVEKSGAWFSYDSQRLGQGRENAKGFLRDNPDIAGRIEAAIRQNMGLVADKILENAVPTAEDFDEGEA.

An ATP-binding site is contributed by 79 to 86; it reads GPESSGKT.

Belongs to the RecA family.

The protein localises to the cytoplasm. In terms of biological role, can catalyze the hydrolysis of ATP in the presence of single-stranded DNA, the ATP-dependent uptake of single-stranded DNA by duplex DNA, and the ATP-dependent hybridization of homologous single-stranded DNAs. It interacts with LexA causing its activation and leading to its autocatalytic cleavage. The chain is Protein RecA from Methylobacterium sp. (strain 4-46).